Consider the following 186-residue polypeptide: ADP-ribosylation factor-like protein 8B (186 aa).

An intramembrane region (note=Mediates targeting to membranes) is located at residues 1-19 (MLALISRLLDWFRSLFWKE). GTP contacts are provided by residues 29–35 (QYSGKTT), 71–75 (DIGGQ), and 130–133 (NKRD). Lys-141 participates in a covalent cross-link: Glycyl lysine isopeptide (Lys-Gly) (interchain with G-Cter in ubiquitin).

This sequence belongs to the small GTPase superfamily. Arf family. Interacts with tubulin. Interacts with BORCS5; recruits ARL8B to lysosomes. Interacts with VPS41; the interaction mediates the recruitment of the HOPS complex to lysosomes. Interacts (GTP-bound form) with PLEKHM2 (via RUN domain); the interaction is required to recruit the motor protein kinesin-1 on lysosomes. Interacts (GTP-bound form) with PLEKHM1 (via RUN domain); the interaction is required for PLEKHM1 localization to lysosomes and for ARL8B function in delivery and degradation of endocytic and autophagic cargo in lysosomes. PLEKHM1 and PLEKHM2 compete for interaction with ARL8B. Interacts (GTP-bound form) with RUFY1; the interaction is required for RUFY1 endosomal location. When GTP-bound, interacts with RUFY3 and RUFY4, but not with RUFY1, nor RUFY2. Ubiquitinated at Lys-141 by RNF167, leading to its degradation.

Its subcellular location is the late endosome membrane. It is found in the lysosome membrane. The protein localises to the cytoplasm. The protein resides in the cytoskeleton. It localises to the spindle. Its subcellular location is the cell projection. It is found in the axon. The protein localises to the synapse. The protein resides in the cytolytic granule membrane. It localises to the early endosome membrane. It carries out the reaction GTP + H2O = GDP + phosphate + H(+). Its function is as follows. Small GTPase which cycles between active GTP-bound and inactive GDP-bound states. In its active state, binds to a variety of effector proteins playing a key role in the regulation of lysosomal positioning which is important for nutrient sensing, natural killer cell-mediated cytotoxicity and antigen presentation. Along with its effectors, orchestrates lysosomal transport and fusion. Localizes specifically to lysosomal membranes and mediates anterograde lysosomal motility by recruiting PLEKHM2, which in turn recruits the motor protein kinesin-1 on lysosomes. Required for lysosomal and cytolytic granule exocytosis. Critical factor involved in NK cell-mediated cytotoxicity. Drives the polarization of cytolytic granules and microtubule-organizing centers (MTOCs) toward the immune synapse between effector NK lymphocytes and target cells. In neurons, mediates the anterograde axonal long-range transport of presynaptic lysosome-related vesicles required for presynaptic biogenesis and synaptic function. Also acts as a regulator of endosome to lysosome trafficking pathways of special significance for host defense. Recruits RUFY1 onto early endosomes regulating endosomes to trans-Golgi network proteins retrieval. Regulates cargo trafficking to lysosomes by binding to PLEKHM1 and recruiting the HOPS subunit VPS41, resulting in functional assembly of the HOPS complex on lysosomal membranes. Plays an important role in cargo delivery to lysosomes for antigen presentation and microbial killing. Directs the intersection of CD1d with lipid antigens in lysosomes, and plays a role in intersecting phagosomes with lysosomes to generate phagolysosomes that kill microbes. Involved in the process of MHC II presentation. Regulates the delivery of antigens to lysosomes and the formation of MHC II-peptide complexes through the recruitment of the HOPS complex to lysosomes allowing the fusion of late endosomes to lysosomes. May play a role in chromosome segregation. The protein is ADP-ribosylation factor-like protein 8B (ARL8B) of Macaca fascicularis (Crab-eating macaque).